The primary structure comprises 353 residues: Quinolinate synthase (353 aa).

Positions 47 and 68 each coordinate iminosuccinate. Cys113 serves as a coordination point for [4Fe-4S] cluster. Residues Tyr139 to Asn141 and Ser156 each bind iminosuccinate. Position 200 (Cys200) interacts with [4Fe-4S] cluster. Iminosuccinate is bound by residues His226 to Glu228 and Thr243. Position 297 (Cys297) interacts with [4Fe-4S] cluster.

The protein belongs to the quinolinate synthase family. Type 1 subfamily. The cofactor is [4Fe-4S] cluster.

The protein resides in the cytoplasm. The enzyme catalyses iminosuccinate + dihydroxyacetone phosphate = quinolinate + phosphate + 2 H2O + H(+). The protein operates within cofactor biosynthesis; NAD(+) biosynthesis; quinolinate from iminoaspartate: step 1/1. In terms of biological role, catalyzes the condensation of iminoaspartate with dihydroxyacetone phosphate to form quinolinate. This Vibrio vulnificus (strain CMCP6) protein is Quinolinate synthase.